The sequence spans 342 residues: N-acetyl-gamma-glutamyl-phosphate reductase (342 aa).

C149 is an active-site residue.

The protein belongs to the NAGSA dehydrogenase family. Type 1 subfamily.

Its subcellular location is the cytoplasm. The catalysed reaction is N-acetyl-L-glutamate 5-semialdehyde + phosphate + NADP(+) = N-acetyl-L-glutamyl 5-phosphate + NADPH + H(+). It participates in amino-acid biosynthesis; L-arginine biosynthesis; N(2)-acetyl-L-ornithine from L-glutamate: step 3/4. Its function is as follows. Catalyzes the NADPH-dependent reduction of N-acetyl-5-glutamyl phosphate to yield N-acetyl-L-glutamate 5-semialdehyde. In Paracoccus denitrificans (strain Pd 1222), this protein is N-acetyl-gamma-glutamyl-phosphate reductase.